The following is a 1003-amino-acid chain: Spheroidin (1003 aa).

Serine 2 is modified (N-acetylserine; by host). A compositionally biased stretch (low complexity) spans 953–970; that stretch reads DANSSSSDSCSDSSSSSE. Residues 953–979 are disordered; the sequence is DANSSSSDSCSDSSSSSESESDSDGCC.

In terms of assembly, may form disulfide-bond-linked aggregates.

In terms of biological role, major component of viral occlusion bodies, the protective complexes in which the virions are embedded in the cytoplasm of their insect hosts. In Amsacta (AmEPV), this protein is Spheroidin.